The chain runs to 371 residues: Alanine dehydrogenase (371 aa).

Substrate contacts are provided by Arg-15 and Lys-75. The active-site Proton donor/acceptor is the His-96. NAD(+) contacts are provided by residues Ser-134, Asp-198, Arg-203, Ser-220, Val-239 to Leu-240, Val-267 to Asp-270, Lys-279, and Val-298 to Met-301. The active-site Proton donor/acceptor is the Asp-270.

This sequence belongs to the AlaDH/PNT family. Requires Mg(2+) as cofactor.

The enzyme catalyses L-alanine + NAD(+) + H2O = pyruvate + NH4(+) + NADH + H(+). It participates in amino-acid degradation; L-alanine degradation via dehydrogenase pathway; NH(3) and pyruvate from L-alanine: step 1/1. Catalyzes the reversible reductive amination of pyruvate to L-alanine. This chain is Alanine dehydrogenase, found in Halomonas elongata (strain ATCC 33173 / DSM 2581 / NBRC 15536 / NCIMB 2198 / 1H9).